The sequence spans 353 residues: Protein RecA (353 aa).

ATP is bound at residue 67–74 (GPESSGKT). Residues 330-353 (SNPNSTPDFSVDDSEGVAETNEDF) are disordered. Over residues 339 to 353 (SVDDSEGVAETNEDF) the composition is skewed to acidic residues.

Belongs to the RecA family.

The protein resides in the cytoplasm. In terms of biological role, can catalyze the hydrolysis of ATP in the presence of single-stranded DNA, the ATP-dependent uptake of single-stranded DNA by duplex DNA, and the ATP-dependent hybridization of homologous single-stranded DNAs. It interacts with LexA causing its activation and leading to its autocatalytic cleavage. The sequence is that of Protein RecA from Escherichia coli O157:H7 (strain EC4115 / EHEC).